A 284-amino-acid chain; its full sequence is MSNQLSLGWPAPAKLNLFLHVNHRREDGYHELQTLFQFISHGDLLDFKVTDDGSLKLHSNIGNVVADSDNLILRAAKLLQERTATEKGAEIWLDKRLPMGGGIGGGSSDAATCLIALNALWQTHLSRDELAELGLALGADVPVFINGLSAFAEGVGEKLIQVSPKEYWYLVLVPDVHVSTAEIFQDPDLPRNTPKLDLDSLMSSPWRNDCQELVVKRYPQVAKTLDWLIEYAPSRMTGTGACVFGEFEQQQQAQDALAQLPSNMTGFVAKGTNISPLELRLAQL.

The active site involves Lys14. 98 to 108 (PMGGGIGGGSS) contributes to the ATP binding site. The active site involves Asp140.

This sequence belongs to the GHMP kinase family. IspE subfamily.

The enzyme catalyses 4-CDP-2-C-methyl-D-erythritol + ATP = 4-CDP-2-C-methyl-D-erythritol 2-phosphate + ADP + H(+). It functions in the pathway isoprenoid biosynthesis; isopentenyl diphosphate biosynthesis via DXP pathway; isopentenyl diphosphate from 1-deoxy-D-xylulose 5-phosphate: step 3/6. In terms of biological role, catalyzes the phosphorylation of the position 2 hydroxy group of 4-diphosphocytidyl-2C-methyl-D-erythritol. In Shewanella woodyi (strain ATCC 51908 / MS32), this protein is 4-diphosphocytidyl-2-C-methyl-D-erythritol kinase.